A 140-amino-acid polypeptide reads, in one-letter code: uncharacterized protein (140 aa).

The region spanning 26 to 80 (IRSQRETAHVSMRQLAERSGVSNPYLSQVERGLRKPSADVLSQIAKALRVSAEVL) is the HTH cro/C1-type domain. A DNA-binding region (H-T-H motif) is located at residues 37–56 (MRQLAERSGVSNPYLSQVER).

This is an uncharacterized protein from Mycobacterium tuberculosis (strain ATCC 25618 / H37Rv).